Here is a 132-residue protein sequence, read N- to C-terminus: Probable histone H2A.2 (132 aa).

It belongs to the histone H2A family. As to quaternary structure, the nucleosome is a histone octamer containing two molecules each of H2A, H2B, H3 and H4 assembled in one H3-H4 heterotetramer and two H2A-H2B heterodimers. The octamer wraps approximately 147 bp of DNA. Post-translationally, not ubiquitinated. In terms of tissue distribution, expressed mainly in non-dividing tissues of the plant. Also found in meristems and dividing cells.

The protein localises to the nucleus. It localises to the chromosome. Core component of nucleosome. Nucleosomes wrap and compact DNA into chromatin, limiting DNA accessibility to the cellular machineries which require DNA as a template. Histones thereby play a central role in transcription regulation, DNA repair, DNA replication and chromosomal stability. DNA accessibility is regulated via a complex set of post-translational modifications of histones, also called histone code, and nucleosome remodeling. The polypeptide is Probable histone H2A.2 (Arabidopsis thaliana (Mouse-ear cress)).